A 617-amino-acid chain; its full sequence is MNAPDKFAQLLALTREPFPASTKNYLIGSRPDVRVPVRDIALTNGEQVSVYDTSGPYTDPAAEIDVRRGLPSVRGAWIEGRGDTERYEGRQRVALDDGSKSEDAARLAQLRAEAAALQRAPLRAKSGASHTGNVTQMHYAKKGIVTPEMEYVALRENGRREWMAQYQQDAAREQRLAGNPMGASIPKIITPEFVRDEVARGRAIIPANINHPEVEPMAIGRTFKVKINANIGNSAVTSSIEEEVEKLVWAIRWGADNVMDLSTGKNIHTTRDWIVRNSPVPIGTVPIYQALEKVGGIAEDLTWEIFRDTLVEQAEQGVDYFTIHAGVRLAFIHLTAQRRTGIVSRGGSIMAKWCMAHHRESFLYEHFEDICDIMKQYDVSFSLGDGLRPGCASDANDEAQFAELRTLGELTRTAWKHDVQTMIEGPGHVPMHMIQANMTEQLRTCHEAPFYTLGPLTIDIAPGYDHIASAIGAAMIGWMGTAMLCYVTPKEHLGLPDRDDVKQGIIAYKIAAHAADVAKGHPGARARDDALSQARFDFRWQDQFNLGLDPETAQQYHDETLPKDSAKVAHFCSMCGPKFCSMKITQEVREFAAQGMQEKAREFRGTGGELYVPIQPA.

Substrate contacts are provided by residues Asn-230, Met-259, Tyr-288, His-324, 344 to 346, 385 to 388, and Glu-424; these read SRG and DGLR. Position 428 (His-428) interacts with Zn(2+). Tyr-451 provides a ligand contact to substrate. A Zn(2+)-binding site is contributed by His-492. Residues Cys-572, Cys-575, and Cys-580 each coordinate [4Fe-4S] cluster.

The protein belongs to the ThiC family. As to quaternary structure, homodimer. It depends on [4Fe-4S] cluster as a cofactor.

It carries out the reaction 5-amino-1-(5-phospho-beta-D-ribosyl)imidazole + S-adenosyl-L-methionine = 4-amino-2-methyl-5-(phosphooxymethyl)pyrimidine + CO + 5'-deoxyadenosine + formate + L-methionine + 3 H(+). It participates in cofactor biosynthesis; thiamine diphosphate biosynthesis. Its function is as follows. Catalyzes the synthesis of the hydroxymethylpyrimidine phosphate (HMP-P) moiety of thiamine from aminoimidazole ribotide (AIR) in a radical S-adenosyl-L-methionine (SAM)-dependent reaction. The polypeptide is Phosphomethylpyrimidine synthase (Paracidovorax citrulli (strain AAC00-1) (Acidovorax citrulli)).